We begin with the raw amino-acid sequence, 525 residues long: Erythropoietin receptor (525 aa).

A signal peptide spans 1–32 (MGAPSSLLFSTAHWRTVPFLLAFWVLLSTGTA). Over 33-249 (EDPTMTPEFL…TIATIIDLRL (217 aa)) the chain is Extracellular. Cysteine 58 and cysteine 68 are joined by a disulfide. 4 N-linked (GlcNAc...) asparagine glycosylation sites follow: asparagine 77, asparagine 100, asparagine 149, and asparagine 185. The cysteines at positions 91 and 107 are disulfide-linked. Residues 146 to 246 (PPLNVTVKEK…APITIATIID (101 aa)) form the Fibronectin type-III domain. The WSXWS motif motif lies at 232–236 (WSDWT). Residues 250–270 (LLLLSIAIFVALIAGVGVYIF) traverse the membrane as a helical segment. The Cytoplasmic segment spans residues 271 to 525 (MRHGMYLKHK…NFLAPIYSQS (255 aa)). A Box 1 motif motif is present at residues 281 to 289 (VWPQVPTPE). 2 disordered regions span residues 434-459 (APRM…QSIP) and 492-513 (LDMS…QNSP). Positions 447–459 (ENSVSSDGKQSIP) are enriched in polar residues. The ITIM motif motif lies at 487 to 492 (LKYAYL).

It belongs to the type I cytokine receptor family. Type 1 subfamily. Expressed in the ventral blood island from stage 28 through to stage 36. Expressed in the circulating blood by stage 40. In the adult, highly expressed in peripheral blood cells including immature erythrocytes and basophils, and moderately expressed in the hematopoietic organs: liver, kidney and spleen. Expressed at a low level in adult brain.

The protein resides in the cell membrane. Its function is as follows. Receptor for erythropoietin. Mediates erythropoietin-induced erythroblast proliferation and differentiation. This is Erythropoietin receptor from Xenopus laevis (African clawed frog).